Consider the following 328-residue polypeptide: Fe(3+) ions import ATP-binding protein FbpC 1 (328 aa).

Positions 7–237 (LVLKNITKAF…PNSLFLANFM (231 aa)) constitute an ABC transporter domain. 39–46 (GPSGCGKT) serves as a coordination point for ATP.

It belongs to the ABC transporter superfamily. Fe(3+) ion importer (TC 3.A.1.10) family. In terms of assembly, the complex is composed of two ATP-binding proteins (FbpC), two transmembrane proteins (FbpB) and a solute-binding protein (FbpA).

It localises to the cell inner membrane. The enzyme catalyses Fe(3+)(out) + ATP + H2O = Fe(3+)(in) + ADP + phosphate + H(+). Part of the ABC transporter complex FbpABC involved in Fe(3+) ions import. Responsible for energy coupling to the transport system. This Haemophilus influenzae (strain ATCC 51907 / DSM 11121 / KW20 / Rd) protein is Fe(3+) ions import ATP-binding protein FbpC 1.